Consider the following 214-residue polypeptide: Transcriptional regulatory protein ComA (214 aa).

The Response regulatory domain maps to 3 to 121 (KILVIDDHPA…KITQYIYHVL (119 aa)). Position 55 is a 4-aspartylphosphate (Asp-55). The HTH luxR-type domain occupies 147–212 (SQKEQDVLTP…EAVLIAKSDG (66 aa)). Residues 171–190 (NQEIADALHLSKRSIEYSLT) constitute a DNA-binding region (H-T-H motif).

Post-translationally, phosphorylated by ComP.

The protein localises to the cytoplasm. Functionally, response regulator in the two-component regulatory system ComP/ComA involved in a major quorum response pathway that regulates the development of genetic competence. Regulates directly the expression of over 20 genes, including genes of the srfA operon, degQ, rapA, rapC, rapE, rapF, etc. Regulates indirectly, through the regulation of comK transcription, the expression of late competence genes. This is Transcriptional regulatory protein ComA (comA) from Bacillus subtilis (strain 168).